Reading from the N-terminus, the 438-residue chain is MDSGSPYHWLRELRYDSHGSNPMIPLIECAKCVASGSIKTADIGLEYISQISSPHGNGVQRMVTYFSEALGYKIVKHLPGVYKALNSSKISLSSDDILVQKYFYDLCPFLKFSYLITNQAIIESMEREKVVHIIDLHCSEPAQWINLIQTLKKRPGGPPFLKITGINEKKEALEQMSFHLTTEAGILDFPLQFNPIISKLEDVDFENLPVKTGDAVAISSVLQLHSLLATDDEMVSSSGAASFNMQRAAHLGQRTFAEWLERDMINAYILSPDSALSPLFLGASPKMGIFLNAMRKLQPKLLVITEQESNLNGCNLTERIDRALYFYGSLFDCLESTVTRTSVERQKLESMLLGEQIKNIITCEGVDRKERHEKLEQWIQRLKMAGFVKVPLSYNGRIEATNLLQRYSHKYKFKEENDCLLVCWSDRPLFSVSAWKFR.

Positions 13 to 436 (LRYDSHGSNP…RPLFSVSAWK (424 aa)) constitute a GRAS domain. The interval 20 to 81 (SNPMIPLIEC…YKIVKHLPGV (62 aa)) is leucine repeat I (LRI). Residues 100 to 165 (QKYFYDLCPF…GGPPFLKITG (66 aa)) are VHIID. A VHIID motif is present at residues 131 to 135 (VHIID). Positions 175–207 (QMSFHLTTEAGILDFPLQFNPIISKLEDVDFEN) are leucine repeat II (LRII). A PFYRE region spans residues 216–359 (VAISSVLQLH…SMLLGEQIKN (144 aa)). The LXXLL motif motif lies at 224 to 228 (LHSLL). Residues 362–436 (TCEGVDRKER…RPLFSVSAWK (75 aa)) are SAW.

The protein belongs to the GRAS family. As to quaternary structure, interacts with RAM1.

It localises to the nucleus. The polypeptide is GRAS family protein TF80 (TF80) (Medicago truncatula (Barrel medic)).